The chain runs to 473 residues: Endoglucanase B (473 aa).

The first 17 residues, 1 to 17 (MKFLNTFSLLSLAIIGS), serve as a signal peptide directing secretion. The tract at residues 18–367 (KAMKNISSKE…GLIKGLGNSI (350 aa)) is catalytic. The Proton donor role is filled by E173. E295 (nucleophile) is an active-site residue. The interval 365–387 (NSIKTRTTIRRTTTTTTSQSQPT) is linker. 2 CBM10 domains span residues 391 to 427 (SCFSVNLGYSCCNGCEVEYTDSDGEWGVENGNWCGIK) and 436 to 473 (ICWSEKLGYPCCQNTSSVVYTDNDGKWGVENGNWCGIY).

It belongs to the glycosyl hydrolase 5 (cellulase A) family.

It catalyses the reaction Endohydrolysis of (1-&gt;4)-beta-D-glucosidic linkages in cellulose, lichenin and cereal beta-D-glucans.. Its function is as follows. Rate of hydrolysis of cellulo-oligosaccharides increased with increasing chain length from cellotriose to cellopentaose. In Neocallimastix patriciarum (Rumen fungus), this protein is Endoglucanase B (CELB).